Consider the following 632-residue polypeptide: tRNA uridine 5-carboxymethylaminomethyl modification enzyme MnmG (632 aa).

Residues glycine 13–glycine 18, valine 125, and serine 180 each bind FAD. An NAD(+)-binding site is contributed by glycine 273 to phenylalanine 287. Glutamine 370 contributes to the FAD binding site.

The protein belongs to the MnmG family. Homodimer. Heterotetramer of two MnmE and two MnmG subunits. The cofactor is FAD.

The protein localises to the cytoplasm. In terms of biological role, NAD-binding protein involved in the addition of a carboxymethylaminomethyl (cmnm) group at the wobble position (U34) of certain tRNAs, forming tRNA-cmnm(5)s(2)U34. This Vibrio vulnificus (strain CMCP6) protein is tRNA uridine 5-carboxymethylaminomethyl modification enzyme MnmG.